The sequence spans 291 residues: tRNA dimethylallyltransferase (291 aa).

An ATP-binding site is contributed by 8–15 (GSTASGKT). Position 10–15 (10–15 (TASGKT)) interacts with substrate. Residues 33 to 36 (DSLC) form an interaction with substrate tRNA region.

It belongs to the IPP transferase family. As to quaternary structure, monomer. Mg(2+) serves as cofactor.

It catalyses the reaction adenosine(37) in tRNA + dimethylallyl diphosphate = N(6)-dimethylallyladenosine(37) in tRNA + diphosphate. Functionally, catalyzes the transfer of a dimethylallyl group onto the adenine at position 37 in tRNAs that read codons beginning with uridine, leading to the formation of N6-(dimethylallyl)adenosine (i(6)A). The polypeptide is tRNA dimethylallyltransferase (Aliarcobacter butzleri (strain RM4018) (Arcobacter butzleri)).